The primary structure comprises 229 residues: Cytidylate kinase (229 aa).

Residue 12–20 (GPSGSGKGT) coordinates ATP.

Belongs to the cytidylate kinase family. Type 1 subfamily.

The protein localises to the cytoplasm. It carries out the reaction CMP + ATP = CDP + ADP. The enzyme catalyses dCMP + ATP = dCDP + ADP. The chain is Cytidylate kinase from Azotobacter vinelandii (strain DJ / ATCC BAA-1303).